The sequence spans 374 residues: Cytochrome b (374 aa).

Transmembrane regions (helical) follow at residues 25-45, 69-90, 105-125, and 170-190; these read FGSM…FLAI, WIIQ…YMHI, WLSG…GYVL, and FFAL…IHII. 2 residues coordinate heme b: histidine 75 and histidine 89. The heme b site is built by histidine 174 and histidine 188. Residue histidine 193 coordinates a ubiquinone. 4 helical membrane-spanning segments follow: residues 218-238, 280-300, 312-332, and 339-358; these read YKDM…LSFT, LGGA…PFTH, LAQI…WTAT, and FITI…MINP.

This sequence belongs to the cytochrome b family. The cytochrome bc1 complex contains 3 respiratory subunits (MT-CYB, CYC1 and UQCRFS1), 2 core proteins (UQCRC1 and UQCRC2) and probably 6 low-molecular weight proteins. It depends on heme b as a cofactor.

The protein localises to the mitochondrion inner membrane. Functionally, component of the ubiquinol-cytochrome c reductase complex (complex III or cytochrome b-c1 complex) that is part of the mitochondrial respiratory chain. The b-c1 complex mediates electron transfer from ubiquinol to cytochrome c. Contributes to the generation of a proton gradient across the mitochondrial membrane that is then used for ATP synthesis. This Calliophis bivirgatus (Blue Malaysian coral snake) protein is Cytochrome b (MT-CYB).